The primary structure comprises 332 residues: Biotin synthase (332 aa).

Positions 53–282 (HFGKKVKLNM…TKEIRISGGR (230 aa)) constitute a Radical SAM core domain. [4Fe-4S] cluster contacts are provided by Cys-71, Cys-75, and Cys-78. [2Fe-2S] cluster-binding residues include Cys-115, Cys-147, Cys-207, and Arg-277.

Belongs to the radical SAM superfamily. Biotin synthase family. In terms of assembly, homodimer. [4Fe-4S] cluster serves as cofactor. The cofactor is [2Fe-2S] cluster.

It carries out the reaction (4R,5S)-dethiobiotin + (sulfur carrier)-SH + 2 reduced [2Fe-2S]-[ferredoxin] + 2 S-adenosyl-L-methionine = (sulfur carrier)-H + biotin + 2 5'-deoxyadenosine + 2 L-methionine + 2 oxidized [2Fe-2S]-[ferredoxin]. The protein operates within cofactor biosynthesis; biotin biosynthesis; biotin from 7,8-diaminononanoate: step 2/2. Its function is as follows. Catalyzes the conversion of dethiobiotin (DTB) to biotin by the insertion of a sulfur atom into dethiobiotin via a radical-based mechanism. The polypeptide is Biotin synthase (Bacillus cereus (strain ATCC 14579 / DSM 31 / CCUG 7414 / JCM 2152 / NBRC 15305 / NCIMB 9373 / NCTC 2599 / NRRL B-3711)).